Here is a 307-residue protein sequence, read N- to C-terminus: N-acetylmuramic acid 6-phosphate etherase (307 aa).

In terms of domain architecture, SIS spans T59–K222. The Proton donor role is filled by E87. Residue E118 is part of the active site.

The protein belongs to the GCKR-like family. MurNAc-6-P etherase subfamily. Homodimer.

It catalyses the reaction N-acetyl-D-muramate 6-phosphate + H2O = N-acetyl-D-glucosamine 6-phosphate + (R)-lactate. Its pathway is amino-sugar metabolism; N-acetylmuramate degradation. Its function is as follows. Specifically catalyzes the cleavage of the D-lactyl ether substituent of MurNAc 6-phosphate, producing GlcNAc 6-phosphate and D-lactate. The sequence is that of N-acetylmuramic acid 6-phosphate etherase from Trichormus variabilis (strain ATCC 29413 / PCC 7937) (Anabaena variabilis).